The chain runs to 2662 residues: Centrosome-associated protein CEP250L1 (2662 aa).

Coiled coils occupy residues 1030–1248 (KVHY…EEEE) and 1281–1719 (ARTH…IDAQ).

It is found in the cytoplasm. Its subcellular location is the cytoskeleton. It localises to the microtubule organizing center. The protein resides in the centrosome. In terms of biological role, part of the centrosome inner core complex. Plays a role in the formation and/or stabilization of the mitotic spindle. Required for proper nuclear segregation and DNA partitioning during cell division. The polypeptide is Centrosome-associated protein CEP250L1 (Toxoplasma gondii (strain ATCC 50611 / Me49)).